The following is a 168-amino-acid chain: Shikimate kinase (168 aa).

Residue 10-15 (CSGKST) participates in ATP binding. Ser-14 provides a ligand contact to Mg(2+). The substrate site is built by Asp-32, Arg-56, and Gly-78. Arg-116 provides a ligand contact to ATP. Position 133 (Arg-133) interacts with substrate.

This sequence belongs to the shikimate kinase family. Monomer. Mg(2+) serves as cofactor.

The protein resides in the cytoplasm. It carries out the reaction shikimate + ATP = 3-phosphoshikimate + ADP + H(+). Its pathway is metabolic intermediate biosynthesis; chorismate biosynthesis; chorismate from D-erythrose 4-phosphate and phosphoenolpyruvate: step 5/7. Its function is as follows. Catalyzes the specific phosphorylation of the 3-hydroxyl group of shikimic acid using ATP as a cosubstrate. This is Shikimate kinase from Aquifex aeolicus (strain VF5).